We begin with the raw amino-acid sequence, 149 residues long: Deoxyuridine 5'-triphosphate nucleotidohydrolase (149 aa).

Substrate-binding positions include 66-68 (RSG), Asn79, 83-85 (TID), and Lys93.

Belongs to the dUTPase family. Mg(2+) serves as cofactor.

It carries out the reaction dUTP + H2O = dUMP + diphosphate + H(+). It participates in pyrimidine metabolism; dUMP biosynthesis; dUMP from dCTP (dUTP route): step 2/2. This enzyme is involved in nucleotide metabolism: it produces dUMP, the immediate precursor of thymidine nucleotides and it decreases the intracellular concentration of dUTP so that uracil cannot be incorporated into DNA. In Corynebacterium glutamicum (strain ATCC 13032 / DSM 20300 / JCM 1318 / BCRC 11384 / CCUG 27702 / LMG 3730 / NBRC 12168 / NCIMB 10025 / NRRL B-2784 / 534), this protein is Deoxyuridine 5'-triphosphate nucleotidohydrolase.